Consider the following 233-residue polypeptide: Large ribosomal subunit protein uL1 (233 aa).

The protein belongs to the universal ribosomal protein uL1 family. As to quaternary structure, part of the 50S ribosomal subunit.

Its function is as follows. Binds directly to 23S rRNA. The L1 stalk is quite mobile in the ribosome, and is involved in E site tRNA release. Protein L1 is also a translational repressor protein, it controls the translation of the L11 operon by binding to its mRNA. The protein is Large ribosomal subunit protein uL1 of Paracoccus denitrificans (strain Pd 1222).